Consider the following 381-residue polypeptide: Cytochrome b (381 aa).

Helical transmembrane passes span 34 to 54 (FGSLLGLCLIIQILTGLFLAM), 78 to 99 (WLIRNIHANGASLFFICVYLHI), 114 to 134 (WNIGVILLFLLMATAFVGYVL), and 179 to 199 (FFAFHFLLPFLILALTIIHLL). Heme b is bound by residues His84 and His98. Heme b contacts are provided by His183 and His197. Position 202 (His202) interacts with a ubiquinone. 4 consecutive transmembrane segments (helical) span residues 227–247 (YKDLLGFFVMIFFLTTLALFM), 289–309 (LGGVLALLFSIFILMLVPLLH), 321–341 (LTQIFFWLLVANSIILTWIGG), and 348–368 (FITVGQIASVSYFSLFLIIMP).

The protein belongs to the cytochrome b family. The cytochrome bc1 complex contains 3 respiratory subunits (MT-CYB, CYC1 and UQCRFS1), 2 core proteins (UQCRC1 and UQCRC2) and probably 6 low-molecular weight proteins. Heme b is required as a cofactor.

The protein localises to the mitochondrion inner membrane. In terms of biological role, component of the ubiquinol-cytochrome c reductase complex (complex III or cytochrome b-c1 complex) that is part of the mitochondrial respiratory chain. The b-c1 complex mediates electron transfer from ubiquinol to cytochrome c. Contributes to the generation of a proton gradient across the mitochondrial membrane that is then used for ATP synthesis. In Sphyrna tiburo tiburo (Hammerhead shark), this protein is Cytochrome b (mt-cyb).